We begin with the raw amino-acid sequence, 292 residues long: Ribosomal protein L11 methyltransferase (292 aa).

S-adenosyl-L-methionine-binding residues include Thr144, Gly165, Asp187, and Asn229.

Belongs to the methyltransferase superfamily. PrmA family.

The protein localises to the cytoplasm. The enzyme catalyses L-lysyl-[protein] + 3 S-adenosyl-L-methionine = N(6),N(6),N(6)-trimethyl-L-lysyl-[protein] + 3 S-adenosyl-L-homocysteine + 3 H(+). Methylates ribosomal protein L11. In Pseudomonas putida (strain W619), this protein is Ribosomal protein L11 methyltransferase.